Consider the following 208-residue polypeptide: Small ribosomal subunit protein uS4 (208 aa).

The region spanning 98 to 161 (LRLDNVVFRL…RKVVRISEAL (64 aa)) is the S4 RNA-binding domain.

Belongs to the universal ribosomal protein uS4 family. As to quaternary structure, part of the 30S ribosomal subunit. Contacts protein S5. The interaction surface between S4 and S5 is involved in control of translational fidelity.

Functionally, one of the primary rRNA binding proteins, it binds directly to 16S rRNA where it nucleates assembly of the body of the 30S subunit. With S5 and S12 plays an important role in translational accuracy. This Anaeromyxobacter sp. (strain Fw109-5) protein is Small ribosomal subunit protein uS4.